A 95-amino-acid polypeptide reads, in one-letter code: MTDESMSYREKAYALLQADAEKIIQLIRVQMDHLTMPQCPVYEEVLDTQMFGLSREIDFAVRLGLVEAKDGKALLDRLERELSTLHEAVAKKRVR.

This sequence belongs to the UPF0358 family.

In Geobacillus kaustophilus (strain HTA426), this protein is UPF0358 protein GK1077.